Reading from the N-terminus, the 384-residue chain is S-adenosylmethionine synthase (384 aa).

His-15 contributes to the ATP binding site. Asp-17 is a binding site for Mg(2+). Glu-43 is a K(+) binding site. Residues Glu-56 and Gln-99 each contribute to the L-methionine site. Residues 99-109 form a flexible loop region; the sequence is QSPDINQGVDR. Residues 164 to 166, 230 to 231, Asp-239, 245 to 246, Ala-262, and Lys-266 each bind ATP; these read DAK, RF, and RK. Residue Asp-239 participates in L-methionine binding. L-methionine is bound at residue Lys-270.

The protein belongs to the AdoMet synthase family. In terms of assembly, homotetramer; dimer of dimers. The cofactor is Mg(2+). K(+) serves as cofactor.

Its subcellular location is the cytoplasm. It catalyses the reaction L-methionine + ATP + H2O = S-adenosyl-L-methionine + phosphate + diphosphate. The protein operates within amino-acid biosynthesis; S-adenosyl-L-methionine biosynthesis; S-adenosyl-L-methionine from L-methionine: step 1/1. Functionally, catalyzes the formation of S-adenosylmethionine (AdoMet) from methionine and ATP. The overall synthetic reaction is composed of two sequential steps, AdoMet formation and the subsequent tripolyphosphate hydrolysis which occurs prior to release of AdoMet from the enzyme. The chain is S-adenosylmethionine synthase from Enterobacter sp. (strain 638).